We begin with the raw amino-acid sequence, 100 residues long: Urease subunit gamma (100 aa).

This sequence belongs to the urease gamma subunit family. In terms of assembly, heterotrimer of UreA (gamma), UreB (beta) and UreC (alpha) subunits. Three heterotrimers associate to form the active enzyme.

It localises to the cytoplasm. It catalyses the reaction urea + 2 H2O + H(+) = hydrogencarbonate + 2 NH4(+). Its pathway is nitrogen metabolism; urea degradation; CO(2) and NH(3) from urea (urease route): step 1/1. This Thioalkalivibrio sulfidiphilus (strain HL-EbGR7) protein is Urease subunit gamma.